A 299-amino-acid chain; its full sequence is Nicotinate-nucleotide pyrophosphorylase [carboxylating] (299 aa).

Residues 8 to 12 (LLLPP) are important for hexamer formation. Residues arginine 102, 138-139 (RK), 160-161 (HR), lysine 171, glutamate 201, aspartate 222, 248-250 (SGG), and glycine 270 each bind quinolinate.

This sequence belongs to the NadC/ModD family. Hexamer formed by 3 homodimers.

It catalyses the reaction nicotinate beta-D-ribonucleotide + CO2 + diphosphate = quinolinate + 5-phospho-alpha-D-ribose 1-diphosphate + 2 H(+). It participates in cofactor biosynthesis; NAD(+) biosynthesis; nicotinate D-ribonucleotide from quinolinate: step 1/1. Functionally, involved in the catabolism of quinolinic acid (QA). In Sus scrofa (Pig), this protein is Nicotinate-nucleotide pyrophosphorylase [carboxylating].